We begin with the raw amino-acid sequence, 433 residues long: O-methyltransferase VdtC (433 aa).

Position 284 (Asp-284) interacts with S-adenosyl-L-methionine. The active-site Proton acceptor is His-335.

Belongs to the class I-like SAM-binding methyltransferase superfamily. Cation-independent O-methyltransferase family. COMT subfamily.

It catalyses the reaction 7,9,10-trihydroxy-3-(2-oxopropyl)-1H-benzo[g]isochromen-1-one + S-adenosyl-L-methionine = 9,10-dihydroxy-7-methoxy-3-(2-oxopropyl)-1H-benzo[g]isochromen-1-one + S-adenosyl-L-homocysteine + H(+). The protein operates within secondary metabolite biosynthesis. In terms of biological role, O-methyltransferase; part of the gene cluster that mediates the biosynthesis of viriditoxin, one of the 'classical' secondary metabolites produced by fungi and that has antibacterial activity. The first step is performed by the polyketide synthase VdtA which condenses one acetyl-CoA and 6 malonyl-CoA units to form the heptaketide monomer backbone of viriditoxin. The product of VdtA is then O-methylated on C7 by the O-methyltransferase VdtC. The O-methyl group is important for the stereoselective coupling of the monomers at the final step of viriditoxin biosynthesis. The short-chain dehydrogenase/reductase VdtF then acts as a stereospecific reductase converting the pyrone to dihydropyrone via the reduction of the C3-C4 double bond. The FAD-binding monooxygenase VdtE then converts the ketone group into a methyl-ester group to yield semi-viriditoxin. Finally, the laccase VdtB is involved in dimerization of 2 semi-viriditoxin molecules to yield the final viriditoxin. VdtB is responsible for the regioselective 6,6'-coupling of semi-viriditoxin, which yields (M)-viriditoxin and (P)-viriditoxin at a ratio of 1:2. The non-catalytic carboxylesterase-like protein VdtD affects the stereochemistical outcome of the coupling. The highly reducing polyketide synthase VdtX is not involved in viriditoxin synthesis, but might possibly play a role in the production of additional metabolites not identified yet. This Byssochlamys spectabilis (Paecilomyces variotii) protein is O-methyltransferase VdtC.